The sequence spans 780 residues: ATP-dependent 6-phosphofructokinase, muscle type (780 aa).

T2 carries the N-acetylthreonine modification. The interval 2–390 (THEEHHATKT…NWEVYKLLAH (389 aa)) is N-terminal catalytic PFK domain 1. Residues G25, 88–89 (RC), and 118–121 (GDGS) contribute to the ATP site. D119 provides a ligand contact to Mg(2+). At S133 the chain carries Phosphoserine. Residues 164–166 (SID), R201, 208–210 (MGR), E264, R292, and 298–301 (HVQR) contribute to the substrate site. D166 (proton acceptor) is an active-site residue. At S377 the chain carries Phosphoserine. Positions 391-401 (VRPPVSKSGSH) are interdomain linker. The C-terminal regulatory PFK domain 2 stretch occupies residues 402 to 780 (TVAVMNVGAP…TRKRSGEAAV (379 aa)). Residues R471 and 528–532 (TVSNN) contribute to the beta-D-fructose 2,6-bisphosphate site. S530 carries an O-linked (GlcNAc) serine glycan. K557 carries the post-translational modification N6-(2-hydroxyisobutyryl)lysine. Beta-D-fructose 2,6-bisphosphate is bound by residues R566, 573 to 575 (MGG), E629, R655, and 661 to 664 (HMQQ). At S667 the chain carries Phosphoserine. R735 lines the beta-D-fructose 2,6-bisphosphate pocket. S775 bears the Phosphoserine mark.

The protein belongs to the phosphofructokinase type A (PFKA) family. ATP-dependent PFK group I subfamily. Eukaryotic two domain clade 'E' sub-subfamily. Homo- and heterotetramers. Phosphofructokinase (PFK) enzyme functions as a tetramer composed of different combinations of 3 types of subunits, called PFKM (M), PFKL (L) and PFKP (P). The composition of the PFK tetramer differs according to the tissue type it is present in. The kinetic and regulatory properties of the tetrameric enzyme are dependent on the subunit composition, hence can vary across tissues. Interacts (via C-terminus) with HK1 (via N-terminal spermatogenic cell-specific region). Mg(2+) serves as cofactor. In terms of processing, glcNAcylation decreases enzyme activity.

It localises to the cytoplasm. The catalysed reaction is beta-D-fructose 6-phosphate + ATP = beta-D-fructose 1,6-bisphosphate + ADP + H(+). It functions in the pathway carbohydrate degradation; glycolysis; D-glyceraldehyde 3-phosphate and glycerone phosphate from D-glucose: step 3/4. Allosterically activated by ADP, AMP, or fructose 2,6-bisphosphate, and allosterically inhibited by ATP or citrate. Catalyzes the phosphorylation of D-fructose 6-phosphate to fructose 1,6-bisphosphate by ATP, the first committing step of glycolysis. The polypeptide is ATP-dependent 6-phosphofructokinase, muscle type (PFKM) (Pongo abelii (Sumatran orangutan)).